Consider the following 264-residue polypeptide: Spermidine/putrescine transport system permease protein PotC (264 aa).

6 helical membrane-spanning segments follow: residues 10–30 (FMTA…VNSF), 66–86 (MAVF…VALY), 109–129 (IVMA…LGFW), 131–151 (LLFS…YSRL), 176–196 (IILP…FTLS), and 232–252 (ALAT…QLIA). Residues 60–248 (AQHSLTMAVF…VLSLVMVIAS (189 aa)) enclose the ABC transmembrane type-1 domain.

The protein belongs to the binding-protein-dependent transport system permease family. CysTW subfamily.

The protein localises to the cell inner membrane. In terms of biological role, required for the activity of the bacterial periplasmic transport system of putrescine and spermidine. The polypeptide is Spermidine/putrescine transport system permease protein PotC (potC) (Shigella flexneri).